A 156-amino-acid chain; its full sequence is Small ribosomal subunit protein uS7 (156 aa).

The protein belongs to the universal ribosomal protein uS7 family. In terms of assembly, part of the 30S ribosomal subunit. Contacts proteins S9 and S11.

One of the primary rRNA binding proteins, it binds directly to 16S rRNA where it nucleates assembly of the head domain of the 30S subunit. Is located at the subunit interface close to the decoding center, probably blocks exit of the E-site tRNA. This is Small ribosomal subunit protein uS7 from Mannheimia succiniciproducens (strain KCTC 0769BP / MBEL55E).